Consider the following 208-residue polypeptide: Protein-L-isoaspartate O-methyltransferase (208 aa).

Serine 59 is an active-site residue.

The protein belongs to the methyltransferase superfamily. L-isoaspartyl/D-aspartyl protein methyltransferase family.

It localises to the cytoplasm. It carries out the reaction [protein]-L-isoaspartate + S-adenosyl-L-methionine = [protein]-L-isoaspartate alpha-methyl ester + S-adenosyl-L-homocysteine. Its function is as follows. Catalyzes the methyl esterification of L-isoaspartyl residues in peptides and proteins that result from spontaneous decomposition of normal L-aspartyl and L-asparaginyl residues. It plays a role in the repair and/or degradation of damaged proteins. This chain is Protein-L-isoaspartate O-methyltransferase, found in Shigella sonnei (strain Ss046).